Here is an 85-residue protein sequence, read N- to C-terminus: Transcription factor 4 (85 aa).

The 54-residue stretch at 7 to 60 (ERRMANNARERLRVRDINEAFKELGRMVQLHLKSDKPQTKLLILHQAVAVILSL) folds into the bHLH domain. Positions 62–85 (QQVRERNLNPKAACLKRREEEKVS) are class A specific domain.

In terms of assembly, efficient DNA binding requires dimerization with another bHLH protein. Forms homo- or heterooligomers with myogenin.

It localises to the nucleus. Its function is as follows. Transcription factor that binds to the immunoglobulin enhancer Mu-E5/KE5-motif. Involved in the initiation of neuronal differentiation. Binds to the E-box present in the somatostatin receptor 2 initiator element (SSTR2-INR) to activate transcription. The chain is Transcription factor 4 (TCF4) from Gallus gallus (Chicken).